We begin with the raw amino-acid sequence, 142 residues long: Deoxyuridine 5'-triphosphate nucleotidohydrolase (142 aa).

Substrate-binding positions include arginine 62–glycine 64, asparagine 75, and threonine 79–aspartate 81.

The protein belongs to the dUTPase family. Mg(2+) serves as cofactor.

It catalyses the reaction dUTP + H2O = dUMP + diphosphate + H(+). It participates in pyrimidine metabolism; dUMP biosynthesis; dUMP from dCTP (dUTP route): step 2/2. This enzyme is involved in nucleotide metabolism: it produces dUMP, the immediate precursor of thymidine nucleotides and it decreases the intracellular concentration of dUTP so that uracil cannot be incorporated into DNA. The protein is Deoxyuridine 5'-triphosphate nucleotidohydrolase of Crocosphaera subtropica (strain ATCC 51142 / BH68) (Cyanothece sp. (strain ATCC 51142)).